The primary structure comprises 143 residues: Large ribosomal subunit protein uL15 (143 aa).

The interval 1 to 57 is disordered; the sequence is MQLNNLKPAAGSKHAKRRVGRGIGSGLGKTAGRGHKGQKSRSGGFHKVGFEGGQMPL. Positions 21 to 31 are enriched in gly residues; it reads RGIGSGLGKTA.

This sequence belongs to the universal ribosomal protein uL15 family. In terms of assembly, part of the 50S ribosomal subunit.

Its function is as follows. Binds to the 23S rRNA. In Ralstonia pickettii (strain 12J), this protein is Large ribosomal subunit protein uL15.